A 255-amino-acid chain; its full sequence is Type III pantothenate kinase (255 aa).

Residue 6-13 participates in ATP binding; sequence DIGNTNIK. A substrate-binding site is contributed by 107 to 110; the sequence is GADR. The Proton acceptor role is filled by aspartate 109. Threonine 132 contributes to the ATP binding site. Threonine 184 provides a ligand contact to substrate.

This sequence belongs to the type III pantothenate kinase family. In terms of assembly, homodimer. It depends on NH4(+) as a cofactor. The cofactor is K(+).

It is found in the cytoplasm. The enzyme catalyses (R)-pantothenate + ATP = (R)-4'-phosphopantothenate + ADP + H(+). The protein operates within cofactor biosynthesis; coenzyme A biosynthesis; CoA from (R)-pantothenate: step 1/5. Catalyzes the phosphorylation of pantothenate (Pan), the first step in CoA biosynthesis. This is Type III pantothenate kinase from Roseiflexus sp. (strain RS-1).